We begin with the raw amino-acid sequence, 245 residues long: MPTFLHHALLACGFLTRLVPARVATADDMAAAVRWFPLAGLVVGGACWLPFALGLAASHPAIQAWLYVLINLWVTRGLHWDGVADLADAWGSSATGERFWDILKDSRIGAFGVMGLLLGFGGQYIGAHEIFISGRLGVLIAAPIVGRGACVILAALVPPGSRSTLGRLTCAGADRIAIGVAATCGMLALLLTTPAITTVTTIAICGAIVTALAHLARREDGINGDFMGACIAGCEGTVLLAASMG.

5 helical membrane passes run 35–55 (WFPLAGLVVGGACWLPFALGL), 108–128 (IGAFGVMGLLLGFGGQYIGAH), 137–157 (GVLIAAPIVGRGACVILAALV), 176–196 (IAIGVAATCGMLALLLTTPAI), and 197–217 (TTVTTIAICGAIVTALAHLAR).

This sequence belongs to the CobS family. Mg(2+) serves as cofactor.

It is found in the cell inner membrane. The catalysed reaction is alpha-ribazole + adenosylcob(III)inamide-GDP = adenosylcob(III)alamin + GMP + H(+). The enzyme catalyses alpha-ribazole 5'-phosphate + adenosylcob(III)inamide-GDP = adenosylcob(III)alamin 5'-phosphate + GMP + H(+). The protein operates within cofactor biosynthesis; adenosylcobalamin biosynthesis; adenosylcobalamin from cob(II)yrinate a,c-diamide: step 7/7. In terms of biological role, joins adenosylcobinamide-GDP and alpha-ribazole to generate adenosylcobalamin (Ado-cobalamin). Also synthesizes adenosylcobalamin 5'-phosphate from adenosylcobinamide-GDP and alpha-ribazole 5'-phosphate. The chain is Adenosylcobinamide-GDP ribazoletransferase from Nitratidesulfovibrio vulgaris (strain ATCC 29579 / DSM 644 / CCUG 34227 / NCIMB 8303 / VKM B-1760 / Hildenborough) (Desulfovibrio vulgaris).